Consider the following 259-residue polypeptide: Undecaprenyl-diphosphatase (259 aa).

A run of 7 helical transmembrane segments spans residues 1–21, 40–60, 75–95, 101–121, 179–199, 206–226, and 239–259; these read MEIF…FLPI, QITL…IIFW, WLTI…ILFE, LFSS…LLYL, SFLL…KDAL, LTWL…YFAI, and TVFA…AGIF.

Belongs to the UppP family.

Its subcellular location is the cell inner membrane. It catalyses the reaction di-trans,octa-cis-undecaprenyl diphosphate + H2O = di-trans,octa-cis-undecaprenyl phosphate + phosphate + H(+). Functionally, catalyzes the dephosphorylation of undecaprenyl diphosphate (UPP). Confers resistance to bacitracin. The polypeptide is Undecaprenyl-diphosphatase (Halothermothrix orenii (strain H 168 / OCM 544 / DSM 9562)).